Reading from the N-terminus, the 540-residue chain is Chaperonin GroEL (540 aa).

Residues 30 to 33 (TLGP), Lys-51, 87 to 91 (DGTTT), Gly-415, 479 to 481 (NAA), and Asp-495 contribute to the ATP site.

This sequence belongs to the chaperonin (HSP60) family. In terms of assembly, forms a cylinder of 14 subunits composed of two heptameric rings stacked back-to-back. Interacts with the co-chaperonin GroES.

It localises to the cytoplasm. It carries out the reaction ATP + H2O + a folded polypeptide = ADP + phosphate + an unfolded polypeptide.. In terms of biological role, together with its co-chaperonin GroES, plays an essential role in assisting protein folding. The GroEL-GroES system forms a nano-cage that allows encapsulation of the non-native substrate proteins and provides a physical environment optimized to promote and accelerate protein folding. This is Chaperonin GroEL from Pluralibacter gergoviae (Enterobacter gergoviae).